Reading from the N-terminus, the 230-residue chain is Cytochrome c oxidase subunit 2 (230 aa).

Residues 1–14 (MAHPSQLGFQDAAS) lie on the Mitochondrial intermembrane side of the membrane. A helical transmembrane segment spans residues 15–45 (PVMEELLHFHDHALMIVFLISTLVLYIIVAM). The Mitochondrial matrix segment spans residues 46 to 59 (VSTKLTNKYILDSQ). A helical membrane pass occupies residues 60–87 (EIEIIWTVLPAVILILIALPSLRILYLM). The Mitochondrial intermembrane portion of the chain corresponds to 88–230 (DEINDPHLTI…SWSSLMLEDA (143 aa)). Histidine 161, cysteine 196, glutamate 198, cysteine 200, histidine 204, and methionine 207 together coordinate Cu cation. Glutamate 198 contributes to the Mg(2+) binding site.

The protein belongs to the cytochrome c oxidase subunit 2 family. As to quaternary structure, component of the cytochrome c oxidase (complex IV, CIV), a multisubunit enzyme composed of 14 subunits. The complex is composed of a catalytic core of 3 subunits MT-CO1, MT-CO2 and MT-CO3, encoded in the mitochondrial DNA, and 11 supernumerary subunits COX4I, COX5A, COX5B, COX6A, COX6B, COX6C, COX7A, COX7B, COX7C, COX8 and NDUFA4, which are encoded in the nuclear genome. The complex exists as a monomer or a dimer and forms supercomplexes (SCs) in the inner mitochondrial membrane with NADH-ubiquinone oxidoreductase (complex I, CI) and ubiquinol-cytochrome c oxidoreductase (cytochrome b-c1 complex, complex III, CIII), resulting in different assemblies (supercomplex SCI(1)III(2)IV(1) and megacomplex MCI(2)III(2)IV(2)). Found in a complex with TMEM177, COA6, COX18, COX20, SCO1 and SCO2. Interacts with TMEM177 in a COX20-dependent manner. Interacts with COX20. Interacts with COX16. Cu cation serves as cofactor.

The protein resides in the mitochondrion inner membrane. It carries out the reaction 4 Fe(II)-[cytochrome c] + O2 + 8 H(+)(in) = 4 Fe(III)-[cytochrome c] + 2 H2O + 4 H(+)(out). Component of the cytochrome c oxidase, the last enzyme in the mitochondrial electron transport chain which drives oxidative phosphorylation. The respiratory chain contains 3 multisubunit complexes succinate dehydrogenase (complex II, CII), ubiquinol-cytochrome c oxidoreductase (cytochrome b-c1 complex, complex III, CIII) and cytochrome c oxidase (complex IV, CIV), that cooperate to transfer electrons derived from NADH and succinate to molecular oxygen, creating an electrochemical gradient over the inner membrane that drives transmembrane transport and the ATP synthase. Cytochrome c oxidase is the component of the respiratory chain that catalyzes the reduction of oxygen to water. Electrons originating from reduced cytochrome c in the intermembrane space (IMS) are transferred via the dinuclear copper A center (CU(A)) of subunit 2 and heme A of subunit 1 to the active site in subunit 1, a binuclear center (BNC) formed by heme A3 and copper B (CU(B)). The BNC reduces molecular oxygen to 2 water molecules using 4 electrons from cytochrome c in the IMS and 4 protons from the mitochondrial matrix. The sequence is that of Cytochrome c oxidase subunit 2 (mt-co2) from Gadus morhua (Atlantic cod).